The sequence spans 296 residues: 33 kDa chaperonin (296 aa).

Cystine bridges form between cysteine 238-cysteine 240 and cysteine 271-cysteine 274.

It belongs to the HSP33 family. Post-translationally, under oxidizing conditions two disulfide bonds are formed involving the reactive cysteines. Under reducing conditions zinc is bound to the reactive cysteines and the protein is inactive.

The protein resides in the cytoplasm. In terms of biological role, redox regulated molecular chaperone. Protects both thermally unfolding and oxidatively damaged proteins from irreversible aggregation. Plays an important role in the bacterial defense system toward oxidative stress. This chain is 33 kDa chaperonin, found in Clostridium botulinum (strain ATCC 19397 / Type A).